The following is a 674-amino-acid chain: UvrABC system protein B (674 aa).

The Helicase ATP-binding domain maps to 26–414 (EGLDSGLAHQ…SGNDIAEQVV (389 aa)). 39–46 (GVTGSGKT) contributes to the ATP binding site. The Beta-hairpin motif lies at 92–115 (YYDYYQPEAYVPTTDTFIEKDASV). One can recognise a Helicase C-terminal domain in the interval 432-586 (QVDDLLSEIR…ALHNKKNGIT (155 aa)). The UVR domain maps to 634 to 669 (ELEIQRLETEMYDLAQNLEFEKAAEARDKIHTLRQQ).

It belongs to the UvrB family. In terms of assembly, forms a heterotetramer with UvrA during the search for lesions. Interacts with UvrC in an incision complex.

The protein resides in the cytoplasm. Functionally, the UvrABC repair system catalyzes the recognition and processing of DNA lesions. A damage recognition complex composed of 2 UvrA and 2 UvrB subunits scans DNA for abnormalities. Upon binding of the UvrA(2)B(2) complex to a putative damaged site, the DNA wraps around one UvrB monomer. DNA wrap is dependent on ATP binding by UvrB and probably causes local melting of the DNA helix, facilitating insertion of UvrB beta-hairpin between the DNA strands. Then UvrB probes one DNA strand for the presence of a lesion. If a lesion is found the UvrA subunits dissociate and the UvrB-DNA preincision complex is formed. This complex is subsequently bound by UvrC and the second UvrB is released. If no lesion is found, the DNA wraps around the other UvrB subunit that will check the other stand for damage. This chain is UvrABC system protein B, found in Photobacterium profundum (strain SS9).